The following is a 355-amino-acid chain: Protein RecA (355 aa).

Position 67-74 (67-74 (GPESSGKT)) interacts with ATP.

The protein belongs to the RecA family.

The protein resides in the cytoplasm. Its function is as follows. Can catalyze the hydrolysis of ATP in the presence of single-stranded DNA, the ATP-dependent uptake of single-stranded DNA by duplex DNA, and the ATP-dependent hybridization of homologous single-stranded DNAs. It interacts with LexA causing its activation and leading to its autocatalytic cleavage. This Proteus mirabilis (strain HI4320) protein is Protein RecA.